The primary structure comprises 546 residues: Glucose-6-phosphate isomerase (546 aa).

The active-site Proton donor is the glutamate 353. Active-site residues include histidine 384 and lysine 512.

Belongs to the GPI family.

Its subcellular location is the cytoplasm. It catalyses the reaction alpha-D-glucose 6-phosphate = beta-D-fructose 6-phosphate. Its pathway is carbohydrate biosynthesis; gluconeogenesis. The protein operates within carbohydrate degradation; glycolysis; D-glyceraldehyde 3-phosphate and glycerone phosphate from D-glucose: step 2/4. Catalyzes the reversible isomerization of glucose-6-phosphate to fructose-6-phosphate. This is Glucose-6-phosphate isomerase from Actinobacillus pleuropneumoniae serotype 3 (strain JL03).